Here is a 398-residue protein sequence, read N- to C-terminus: Succinyl-diaminopimelate desuccinylase (398 aa).

His73 is a Zn(2+) binding site. Asp75 is a catalytic residue. Asp106 contacts Zn(2+). Glu140 (proton acceptor) is an active-site residue. Residues Glu141, Glu169, and His366 each coordinate Zn(2+).

This sequence belongs to the peptidase M20A family. DapE subfamily. Homodimer. Zn(2+) serves as cofactor. Co(2+) is required as a cofactor.

The catalysed reaction is N-succinyl-(2S,6S)-2,6-diaminopimelate + H2O = (2S,6S)-2,6-diaminopimelate + succinate. Its pathway is amino-acid biosynthesis; L-lysine biosynthesis via DAP pathway; LL-2,6-diaminopimelate from (S)-tetrahydrodipicolinate (succinylase route): step 3/3. Functionally, catalyzes the hydrolysis of N-succinyl-L,L-diaminopimelic acid (SDAP), forming succinate and LL-2,6-diaminopimelate (DAP), an intermediate involved in the bacterial biosynthesis of lysine and meso-diaminopimelic acid, an essential component of bacterial cell walls. The polypeptide is Succinyl-diaminopimelate desuccinylase (Agrobacterium fabrum (strain C58 / ATCC 33970) (Agrobacterium tumefaciens (strain C58))).